Here is a 434-residue protein sequence, read N- to C-terminus: Methyl-coenzyme M reductase subunit beta (434 aa).

A coenzyme M-binding site is contributed by Tyr-365. Gly-367 is a binding site for coenzyme B.

This sequence belongs to the methyl-coenzyme M reductase beta subunit family. In terms of assembly, MCR is a hexamer of two alpha, two beta, and two gamma chains, forming a dimer of heterotrimers. Requires coenzyme F430 as cofactor.

It localises to the cytoplasm. The enzyme catalyses coenzyme B + methyl-coenzyme M = methane + coenzyme M-coenzyme B heterodisulfide. It participates in one-carbon metabolism; methyl-coenzyme M reduction; methane from methyl-coenzyme M: step 1/1. Component of the methyl-coenzyme M reductase (MCR) I that catalyzes the reductive cleavage of methyl-coenzyme M (CoM-S-CH3 or 2-(methylthio)ethanesulfonate) using coenzyme B (CoB or 7-mercaptoheptanoylthreonine phosphate) as reductant which results in the production of methane and the mixed heterodisulfide of CoB and CoM (CoM-S-S-CoB). This is the final step in methanogenesis. In Methanosarcina barkeri (strain Fusaro / DSM 804), this protein is Methyl-coenzyme M reductase subunit beta (mcrB).